The sequence spans 417 residues: Voltage-gated ClC-type chloride channel ClcB (417 aa).

Transmembrane regions (helical) follow at residues 5–25 (LLIA…FRHA), 54–74 (LITP…WQKM), 146–166 (LWIA…PLAG), 168–188 (LFIA…PVVV), 222–242 (VMIV…MWLM), 258–278 (WQLA…PTVW), 288–308 (FLLS…KILA), 316–336 (GAPG…GMFL), 349–371 (EIAI…HAPI), and 380–400 (MTGE…ASVL).

The protein belongs to the chloride channel (TC 2.A.49) family. ClcB subfamily.

The protein localises to the cell inner membrane. Probably acts as an electrical shunt for an outwardly-directed proton pump that is linked to amino acid decarboxylation, as part of the extreme acid resistance (XAR) response. In Salmonella dublin (strain CT_02021853), this protein is Voltage-gated ClC-type chloride channel ClcB.